We begin with the raw amino-acid sequence, 172 residues long: Large ribosomal subunit protein uL10 (172 aa).

The protein belongs to the universal ribosomal protein uL10 family. As to quaternary structure, part of the ribosomal stalk of the 50S ribosomal subunit. The N-terminus interacts with L11 and the large rRNA to form the base of the stalk. The C-terminus forms an elongated spine to which L12 dimers bind in a sequential fashion forming a multimeric L10(L12)X complex.

In terms of biological role, forms part of the ribosomal stalk, playing a central role in the interaction of the ribosome with GTP-bound translation factors. In Acidothermus cellulolyticus (strain ATCC 43068 / DSM 8971 / 11B), this protein is Large ribosomal subunit protein uL10.